We begin with the raw amino-acid sequence, 264 residues long: 5'-nucleotidase SurE (264 aa).

The a divalent metal cation site is built by aspartate 10, aspartate 11, serine 43, and asparagine 99.

Belongs to the SurE nucleotidase family. It depends on a divalent metal cation as a cofactor.

The protein resides in the cytoplasm. It carries out the reaction a ribonucleoside 5'-phosphate + H2O = a ribonucleoside + phosphate. Its function is as follows. Nucleotidase that shows phosphatase activity on nucleoside 5'-monophosphates. The polypeptide is 5'-nucleotidase SurE (Methanococcus maripaludis (strain C7 / ATCC BAA-1331)).